The chain runs to 598 residues: Elongation factor 4 (598 aa).

A tr-type G domain is found at 4 to 186 (DHIRNFSIIA…AIVKRVPPPK (183 aa)). Residues 16–21 (DHGKST) and 133–136 (NKID) contribute to the GTP site.

The protein belongs to the TRAFAC class translation factor GTPase superfamily. Classic translation factor GTPase family. LepA subfamily.

The protein resides in the cell inner membrane. It carries out the reaction GTP + H2O = GDP + phosphate + H(+). In terms of biological role, required for accurate and efficient protein synthesis under certain stress conditions. May act as a fidelity factor of the translation reaction, by catalyzing a one-codon backward translocation of tRNAs on improperly translocated ribosomes. Back-translocation proceeds from a post-translocation (POST) complex to a pre-translocation (PRE) complex, thus giving elongation factor G a second chance to translocate the tRNAs correctly. Binds to ribosomes in a GTP-dependent manner. The protein is Elongation factor 4 of Magnetococcus marinus (strain ATCC BAA-1437 / JCM 17883 / MC-1).